Reading from the N-terminus, the 418-residue chain is AP-3 complex subunit mu-2 (418 aa).

Positions 176-417 (NNEAYFDVIE…MTKAGKFQVR (242 aa)) constitute an MHD domain.

This sequence belongs to the adaptor complexes medium subunit family. AP-3 associates with the BLOC-1 complex. Adaptor protein complex 3 (AP-3) is a heterotetramer composed of two large adaptins (delta-type subunit AP3D1 and beta-type subunit AP3B1 or AP3B2), a medium adaptin (mu-type subunit AP3M1 or AP3M2) and a small adaptin (sigma-type subunit APS1 or AP3S2).

It localises to the golgi apparatus. The protein localises to the cytoplasmic vesicle membrane. In terms of biological role, part of the AP-3 complex, an adaptor-related complex which is not clathrin-associated. The complex is associated with the Golgi region as well as more peripheral structures. It facilitates the budding of vesicles from the Golgi membrane and may be directly involved in trafficking to lysosomes. In concert with the BLOC-1 complex, AP-3 is required to target cargos into vesicles assembled at cell bodies for delivery into neurites and nerve terminals. The sequence is that of AP-3 complex subunit mu-2 (AP3M2) from Homo sapiens (Human).